A 653-amino-acid chain; its full sequence is MDEIDEMFSNLLGEMDLLTQSLEIETLPPPTRSASTTEINFSVGFKDLNESLNALEDNDLDALMAELVADITDAEQNVATYNNKSTAPFPPADASNSYHFHPPPMPSIITEDLSLLPPPPEFDPHYPPPPPDPLTEPKTQEELESKAKANKINLALSKMKEAKVKKRIVKVHMIDSSTKTLMVEEHQTVRDVLDNLFEKTHCDCSIEWCLFEVTPELQIERFFEDHENIVEILANWTRDSVNTIHFLEKNEKYAVFKKPQNFYMATKGSADLKDMNEKNKVSLLEQSFCGASVTVPELEAALYLKEDGKKSWKKRYFLLRASGIYYVPKGKTKTSRDLACFVQFDNVNVYYGTQYRMKYKAPTDHCFVLKHPQIQKESQYIKYLCCEDPWLLHQWVTGIRIAKYGKILYDNYKTAVQRGGLASHWSTLGSSSVSTAAGSSQGNGQICQNVTTISSSFSDAWKHGEANKQEKKSSEVNKPETKSATPTVTKRPPPTPRRASSISRVTDHPAFPPKPKAINTDIMSGPPQFPPPEPLQPADDFLPPPPPDFFDAPPDFLPPSPPSFMSNAENPPPPPVTQLQMSNAPAPPPPPPPPAPAANVPPLPVKKHPPKPPKRQSIVGPMPGTNAHGGAGGQPDFMSDLMKALQKKREPPT.

The segment at 82-141 (NNKSTAPFPPADASNSYHFHPPPMPSIITEDLSLLPPPPEFDPHYPPPPPDPLTEPKTQE) is disordered. The segment covering 116-134 (LPPPPEFDPHYPPPPPDPL) has biased composition (pro residues). One can recognise a Ras-associating domain in the interval 165 to 253 (KKRIVKVHMI…IHFLEKNEKY (89 aa)). The region spanning 295–404 (VPELEAALYL…WVTGIRIAKY (110 aa)) is the PH domain. The segment covering 462-481 (KHGEANKQEKKSSEVNKPET) has biased composition (basic and acidic residues). The segment at 462 to 653 (KHGEANKQEK…ALQKKREPPT (192 aa)) is disordered. A compositionally biased stretch (pro residues) spans 585–604 (PAPPPPPPPPAPAANVPPLP). Positions 605–614 (VKKHPPKPPK) are enriched in basic residues.

Belongs to the MRL family.

It is found in the cell membrane. Its subcellular location is the cytoplasm. The protein resides in the cytoskeleton. Appears to function in the signal transduction from Ras activation to actin cytoskeletal remodeling. This Xenopus laevis (African clawed frog) protein is Amyloid beta A4 precursor protein-binding family B member 1-interacting protein (apbb1ip).